A 153-amino-acid polypeptide reads, in one-letter code: Fucose mutarotase (153 aa).

Catalysis depends on H24, which acts as the Proton donor. Substrate is bound at residue D32. Residue D69 is part of the active site. 4 residues coordinate substrate: M78, Y119, Y137, and N139. Y119 is a catalytic residue.

It belongs to the RbsD / FucU family.

The catalysed reaction is alpha-L-fucose = beta-L-fucose. Involved in the interconversion between alpha- and beta-L-fucoses. This chain is Fucose mutarotase (fuom), found in Danio rerio (Zebrafish).